The chain runs to 379 residues: Actin, cytoplasmic (379 aa).

This sequence belongs to the actin family.

The protein localises to the cytoplasm. It is found in the cytoskeleton. It carries out the reaction ATP + H2O = ADP + phosphate + H(+). In terms of biological role, actins are highly conserved proteins that are involved in various types of cell motility and are ubiquitously expressed in all eukaryotic cells. The chain is Actin, cytoplasmic from Euplotes crassus.